A 202-amino-acid chain; its full sequence is Endothelin-1 (202 aa).

A signal peptide spans 1 to 25 (MDYFPMIFALLFVAFQGAPEAAVLG). Positions 26 to 50 (TELSAGAEDGGEKPAPATPWRPRRS) are excised as a propeptide. 2 disulfides stabilise this stretch: Cys53-Cys67 and Cys55-Cys63. Positions 74–202 (VNTPEHVVPY…DKKVIYNRAH (129 aa)) are excised as a propeptide. Residues 110–124 (CQCASQTDKKCWNFC) are endothelin-like.

Belongs to the endothelin/sarafotoxin family.

It is found in the secreted. Its function is as follows. Endothelins are endothelium-derived vasoconstrictor peptides. Probable ligand for G-protein coupled receptors EDNRA and EDNRB which activates PTK2B, BCAR1, BCAR3 and, GTPases RAP1 and RHOA cascade in glomerular mesangial cells. Also binds the DEAR/FBXW7-AS1 receptor. Promotes mesenteric arterial wall remodeling via activation of ROCK signaling and subsequent colocalization of NFATC3 with F-actin filaments. NFATC3 then translocates to the nucleus where it subsequently promotes the transcription of the smooth muscle hypertrophy and differentiation marker ACTA2. The chain is Endothelin-1 (EDN1) from Bos taurus (Bovine).